The primary structure comprises 259 residues: Ras-related protein Rab-34 (259 aa).

Methionine 1 bears the N-acetylmethionine mark. Positions 62, 63, 64, 65, 66, 78, 81, and 84 each coordinate GTP. Residue threonine 66 participates in Mg(2+) binding. The short motif at 71-89 (RFCKDTFDKNYKATIGVDF) is the Switch 1 element. Mg(2+)-binding residues include threonine 84 and aspartate 107. The Switch 2 signature appears at 108 to 127 (TAGQERFKCIASTYYRGAQA). Glycine 110, lysine 167, aspartate 169, and serine 198 together coordinate GTP. Serine 241 carries the post-translational modification Phosphoserine. 2 S-geranylgeranyl cysteine lipidation sites follow: cysteine 257 and cysteine 258.

Belongs to the small GTPase superfamily. Rab family. In terms of assembly, interacts with RILP. The GTP-bound form interacts with REP15. The cofactor is Mg(2+).

The protein localises to the cytoplasm. The protein resides in the golgi apparatus. It is found in the cytoplasmic vesicle. It localises to the phagosome. Its subcellular location is the phagosome membrane. The protein localises to the cell projection. The protein resides in the cilium. It is found in the cytoskeleton. It localises to the microtubule organizing center. Its subcellular location is the centrosome. The protein localises to the centriole. It carries out the reaction GTP + H2O = GDP + phosphate + H(+). Regulated by guanine nucleotide exchange factors (GEFs) which promote the exchange of bound GDP for free GTP. Regulated by GTPase activating proteins (GAPs) which increase the GTP hydrolysis activity. Inhibited by GDP dissociation inhibitors (GDIs). The small GTPases Rab are key regulators of intracellular membrane trafficking, from the formation of transport vesicles to their fusion with membranes. Rabs cycle between an inactive GDP-bound form and an active GTP-bound form that is able to recruit to membranes different sets of downstream effectors directly responsible for vesicle formation, movement, tethering and fusion. RAB34 transports protein involved in the redistribution of lysosomes to the peri-Golgi region. Plays a role in the maturation of phagosomes that engulf pathogens, such as S.aureus and M.tuberculosis. Plays a role in the fusion of phagosomes with lysosomes. Required for the early steps of intracellular ciliogenesis, the cilium assembly pathway initiated by trafficking and docking of ciliary vesicles to the centrioles in the cytoplasm, followed by axoneme formation in the cytoplasm. After axoneme elongation, the centrioles migrate close to the cell surface so that ciliary vesicles can fuse with the plasma membrane to expose cilia to the extracellular space. It seems dispensable for ciliogenesis via the extracellular pathway where cilium assembly begins after migration and docking of the centriole to the plasma membrane. Also acts as a positive regulator of hedgehog signaling and regulates ciliary function. The protein is Ras-related protein Rab-34 of Mus musculus (Mouse).